We begin with the raw amino-acid sequence, 277 residues long: Probable ketoamine kinase HMPREF0351_12196 (277 aa).

84–86 (EWI) contributes to the ATP binding site. The active-site Proton acceptor is D186.

It belongs to the fructosamine kinase family.

It carries out the reaction N(6)-(D-ribulosyl)-L-lysine + ATP = N(6)-(3-O-phospho-D-ribulosyl)-L-lysine + ADP + H(+). The enzyme catalyses N-(D-ribulosyl)-cadaverine + ATP = N-(3-O-phospho-D-ribulosyl)-cadaverine + ADP + H(+). It catalyses the reaction N(6)-(D-erythrulosyl)-L-lysine + ATP = N(6)-(3-O-phospho-D-erythrulosyl)-L-lysine + ADP + H(+). The catalysed reaction is N-(D-erythrulosyl)-cadaverine + ATP = N-(3-O-phospho-D-erythrulosyl)-cadaverine + ADP + H(+). It carries out the reaction N(6)-D-ribulosyl-L-lysyl-[protein] + ATP = N(6)-(3-O-phospho-D-ribulosyl)-L-lysyl-[protein] + ADP + H(+). The enzyme catalyses N(6)-(D-erythrulosyl)-L-lysyl-[protein] + ATP = N(6)-(3-O-phospho-D-erythrulosyl)-L-lysyl-[protein] + ADP + H(+). Its function is as follows. Ketoamine kinase that phosphorylates ketoamines, such as erythruloselysine, erythrulosecadaverine, ribuloselysine and ribulosecadaverine, on the third carbon of the sugar moiety to generate ketoamine 3-phosphate. Has higher activity on free lysine (erythruloselysine and ribuloselysine), than on ribuloselysine and erythruloselysine residues on glycated proteins. This chain is Probable ketoamine kinase HMPREF0351_12196, found in Enterococcus faecium (strain ATCC BAA-472 / TX0016 / DO).